Consider the following 218-residue polypeptide: MTAQTTPERRPDHLTLALPKGRIMDDAIALLSQAGLPLTRPEASRALRHEFPGVTVLELRNQDVPVYVDLGVADAGIVGKDVLLEAGRPVYEPVDLHFAECRLSLIREIGASGPIARVGTKYPRAARAYLQERGIPAEVVKLSGNIELAALTGLADAVIDLVQTGSTLRANHLEEVDVLFHSSARLIVNRTALKLRRERLRPLIARLRELTAPAGEES.

This sequence belongs to the ATP phosphoribosyltransferase family. Short subfamily. Heteromultimer composed of HisG and HisZ subunits.

It localises to the cytoplasm. It catalyses the reaction 1-(5-phospho-beta-D-ribosyl)-ATP + diphosphate = 5-phospho-alpha-D-ribose 1-diphosphate + ATP. It functions in the pathway amino-acid biosynthesis; L-histidine biosynthesis; L-histidine from 5-phospho-alpha-D-ribose 1-diphosphate: step 1/9. Catalyzes the condensation of ATP and 5-phosphoribose 1-diphosphate to form N'-(5'-phosphoribosyl)-ATP (PR-ATP). Has a crucial role in the pathway because the rate of histidine biosynthesis seems to be controlled primarily by regulation of HisG enzymatic activity. The sequence is that of ATP phosphoribosyltransferase (hisG) from Deinococcus radiodurans (strain ATCC 13939 / DSM 20539 / JCM 16871 / CCUG 27074 / LMG 4051 / NBRC 15346 / NCIMB 9279 / VKM B-1422 / R1).